The following is a 313-amino-acid chain: 4-diphosphocytidyl-2-C-methyl-D-erythritol kinase (313 aa).

Lys29 is a catalytic residue. 113–123 (PMGGGVGGGSS) contributes to the ATP binding site. Asp155 is an active-site residue.

Belongs to the GHMP kinase family. IspE subfamily.

The catalysed reaction is 4-CDP-2-C-methyl-D-erythritol + ATP = 4-CDP-2-C-methyl-D-erythritol 2-phosphate + ADP + H(+). The protein operates within isoprenoid biosynthesis; isopentenyl diphosphate biosynthesis via DXP pathway; isopentenyl diphosphate from 1-deoxy-D-xylulose 5-phosphate: step 3/6. In terms of biological role, catalyzes the phosphorylation of the position 2 hydroxy group of 4-diphosphocytidyl-2C-methyl-D-erythritol. In Haemophilus influenzae (strain 86-028NP), this protein is 4-diphosphocytidyl-2-C-methyl-D-erythritol kinase.